The sequence spans 480 residues: tRNA-2-methylthio-N(6)-dimethylallyladenosine synthase (480 aa).

Positions 29–145 (GSFWIQTFGC…LEALLTQVDN (117 aa)) constitute an MTTase N-terminal domain. Cysteine 38, cysteine 74, cysteine 108, cysteine 180, cysteine 184, and cysteine 187 together coordinate [4Fe-4S] cluster. The region spanning 166–403 (RDSTICAWVN…NALVERIALQ (238 aa)) is the Radical SAM core domain. In terms of domain architecture, TRAM spans 406–474 (SRYSGKVEQV…AFSLSGTPCE (69 aa)).

This sequence belongs to the methylthiotransferase family. MiaB subfamily. In terms of assembly, monomer. The cofactor is [4Fe-4S] cluster.

Its subcellular location is the cytoplasm. It carries out the reaction N(6)-dimethylallyladenosine(37) in tRNA + (sulfur carrier)-SH + AH2 + 2 S-adenosyl-L-methionine = 2-methylsulfanyl-N(6)-dimethylallyladenosine(37) in tRNA + (sulfur carrier)-H + 5'-deoxyadenosine + L-methionine + A + S-adenosyl-L-homocysteine + 2 H(+). Catalyzes the methylthiolation of N6-(dimethylallyl)adenosine (i(6)A), leading to the formation of 2-methylthio-N6-(dimethylallyl)adenosine (ms(2)i(6)A) at position 37 in tRNAs that read codons beginning with uridine. This Prochlorococcus marinus (strain MIT 9313) protein is tRNA-2-methylthio-N(6)-dimethylallyladenosine synthase.